The following is a 370-amino-acid chain: Peptide chain release factor 1 (370 aa).

Residue glutamine 231 is modified to N5-methylglutamine. Positions 284–293 (AREERERETR) are enriched in basic and acidic residues. Positions 284–303 (AREERERETRAAQVGTGERS) are disordered.

This sequence belongs to the prokaryotic/mitochondrial release factor family. Post-translationally, methylated by PrmC. Methylation increases the termination efficiency of RF1.

The protein resides in the cytoplasm. In terms of biological role, peptide chain release factor 1 directs the termination of translation in response to the peptide chain termination codons UAG and UAA. The sequence is that of Peptide chain release factor 1 from Deinococcus geothermalis (strain DSM 11300 / CIP 105573 / AG-3a).